Consider the following 256-residue polypeptide: NAD-dependent protein deacylase 4 (256 aa).

The Deacetylase sirtuin-type domain maps to 1–250 (MRLPAEALKD…AKIHESLSTG (250 aa)). Residue 19-39 (GAGISAESGILTYLDQMPKLW) participates in NAD(+) binding. Positions 64 and 67 each coordinate substrate. 98-101 (QNVD) is a binding site for NAD(+). H116 (proton acceptor) is an active-site residue. C124, C127, C152, and C155 together coordinate Zn(2+). Residues 192-194 (GTS), 218-220 (NTV), and A236 contribute to the NAD(+) site.

The protein belongs to the sirtuin family. Class III subfamily. Zn(2+) is required as a cofactor.

It is found in the cytoplasm. The catalysed reaction is N(6)-acetyl-L-lysyl-[protein] + NAD(+) + H2O = 2''-O-acetyl-ADP-D-ribose + nicotinamide + L-lysyl-[protein]. It carries out the reaction N(6)-succinyl-L-lysyl-[protein] + NAD(+) + H2O = 2''-O-succinyl-ADP-D-ribose + nicotinamide + L-lysyl-[protein]. Its function is as follows. NAD-dependent lysine deacetylase and desuccinylase that specifically removes acetyl and succinyl groups on target proteins. Modulates the activities of several proteins which are inactive in their acylated form. This Pseudomonas syringae pv. tomato (strain ATCC BAA-871 / DC3000) protein is NAD-dependent protein deacylase 4.